The primary structure comprises 515 residues: Sugar transport protein MST4 (515 aa).

At 1-17 the chain is on the cytoplasmic side; it reads MAGGFSVSGSGVEFEAK. The chain crosses the membrane as a helical span at residues 18–38; it reads ITPIVIISCIMAATGGLMFGY. The Extracellular segment spans residues 39–78; it reads DVGISGGVTSMDDFLREFFPTVLKKKHEDKESNYCKYDNQ. The helical transmembrane segment at 79–99 threads the bilayer; sequence GLQLFTSSLYLAGLTATFFAS. Residues 100 to 108 lie on the Cytoplasmic side of the membrane; sequence YTTRRLGRR. A helical transmembrane segment spans residues 109-129; it reads LTMLIAGVFFIVGVIFNGAAQ. Residues 130 to 138 are Extracellular-facing; it reads NLAMLIVGR. A helical membrane pass occupies residues 139-159; sequence ILLGCGVGFANQAVPLFLSEI. Residues 160-165 lie on the Cytoplasmic side of the membrane; sequence APTRIR. Residues 166–186 form a helical membrane-spanning segment; that stretch reads GGLNILFQLNVTIGILFANLV. The Extracellular portion of the chain corresponds to 187–199; the sequence is NYGTAKIHPWGWR. A helical membrane pass occupies residues 200-220; it reads LSLSLAGIPAALLTLGALFVV. Topologically, residues 221–280 are cytoplasmic; it reads DTPNSLIERGRLEEGKAVLRKIRGTDNVEPEFNEIVEASRVAQEVKHPFRNLLQRRNRPQ. A helical membrane pass occupies residues 281 to 301; it reads LVIAVLLQIFQQFTGINAIMF. Residues 302 to 315 are Extracellular-facing; sequence YAPVLFNTLGFKTD. Residues 316–336 traverse the membrane as a helical segment; that stretch reads ASLYSAVITGAVNVLSTLVSV. The Cytoplasmic segment spans residues 337–347; that stretch reads YSVDRVGRRML. A helical transmembrane segment spans residues 348–368; sequence LLEAGVQMFLSQVAIAVVLGI. The Extracellular portion of the chain corresponds to 369–379; it reads KVTDRSDNLGH. The chain crosses the membrane as a helical span at residues 380 to 400; sequence GWAIMVVVMVCTFVSSFAWSW. Residues 401-422 are Cytoplasmic-facing; sequence GPLGWLIPSETFPLETRSAGQS. A helical transmembrane segment spans residues 423–443; it reads VTVCVNLLFTFVIAQAFLSML. At 444–448 the chain is on the extracellular side; that stretch reads CHLKY. Residues 449–469 form a helical membrane-spanning segment; the sequence is AIFAFFSAWVVVMSLFVLFFL. The Cytoplasmic segment spans residues 470–515; sequence PETKNIPIEEMTERVWKQHWFWKRFMDDADKHHVVPNGGKSNGATV.

This sequence belongs to the major facilitator superfamily. Sugar transporter (TC 2.A.1.1) family. Expressed in roots, shoots, leaf blades, leaf sheaths, anthers, ovaries and embryos.

The protein localises to the membrane. Its function is as follows. Mediates active uptake of hexoses by sugar:proton symport. Can transport glucose, fructose, mannose and galactose. Can transport xylose and ribose. The polypeptide is Sugar transport protein MST4 (Oryza sativa subsp. japonica (Rice)).